The following is a 37-amino-acid chain: Large ribosomal subunit protein bL36 (37 aa).

It belongs to the bacterial ribosomal protein bL36 family.

The sequence is that of Large ribosomal subunit protein bL36 from Vibrio atlanticus (strain LGP32) (Vibrio splendidus (strain Mel32)).